The chain runs to 377 residues: Endoplasmic reticulum-Golgi intermediate compartment protein 2 (377 aa).

Residues 1–33 are Cytoplasmic-facing; sequence MRRLNRKKTLSLVKELDAFPKVPESYVETSASG. A helical membrane pass occupies residues 34-54; it reads GTVSLIAFTTMALLTIMEFSV. The Lumenal portion of the chain corresponds to 55–319; it reads YQDTWMKYEY…PFWQFFVRLC (265 aa). A helical transmembrane segment spans residues 320–340; the sequence is GIVGGIFSTTGMLHGIGKFIV. Over 341–377 the chain is Cytoplasmic; that stretch reads EIICCRFRLGSYKPVNSVPFEDGHTDNHLPLLENNTH.

Belongs to the ERGIC family. May form a heteromeric complex composed of ERGIC1, ERGIC2 and ERGIC3. Interacts with ERGIC3, the interaction is required for the stable expression of both proteins. May interact with EEF1A1.

Its subcellular location is the endoplasmic reticulum-Golgi intermediate compartment membrane. It is found in the golgi apparatus. It localises to the cis-Golgi network membrane. The protein resides in the endoplasmic reticulum membrane. The protein localises to the cytoplasm. Its subcellular location is the nucleus. Possible role in transport between endoplasmic reticulum and Golgi. In Macaca fascicularis (Crab-eating macaque), this protein is Endoplasmic reticulum-Golgi intermediate compartment protein 2 (ERGIC2).